A 311-amino-acid polypeptide reads, in one-letter code: Probable branched-chain-amino-acid aminotransferase (311 aa).

An N6-(pyridoxal phosphate)lysine modification is found at Lys-160.

The protein belongs to the class-IV pyridoxal-phosphate-dependent aminotransferase family. Requires pyridoxal 5'-phosphate as cofactor.

The enzyme catalyses L-leucine + 2-oxoglutarate = 4-methyl-2-oxopentanoate + L-glutamate. It catalyses the reaction L-isoleucine + 2-oxoglutarate = (S)-3-methyl-2-oxopentanoate + L-glutamate. It carries out the reaction L-valine + 2-oxoglutarate = 3-methyl-2-oxobutanoate + L-glutamate. Its pathway is amino-acid biosynthesis; L-isoleucine biosynthesis; L-isoleucine from 2-oxobutanoate: step 4/4. It participates in amino-acid biosynthesis; L-leucine biosynthesis; L-leucine from 3-methyl-2-oxobutanoate: step 4/4. It functions in the pathway amino-acid biosynthesis; L-valine biosynthesis; L-valine from pyruvate: step 4/4. Acts on leucine, isoleucine and valine. The protein is Probable branched-chain-amino-acid aminotransferase (ilvE) of Aquifex aeolicus (strain VF5).